Consider the following 525-residue polypeptide: Neuropilin and tolloid-like protein 2 (525 aa).

The signal sequence occupies residues 1–22; the sequence is MALERLCSVLKVLLITVLVVEG. Residues 23-347 are Extracellular-facing; the sequence is IAVAQKTQDG…GVFEQITKTH (325 aa). 7 cysteine pairs are disulfide-bonded: Cys45-Cys72, Cys100-Cys122, Cys177-Cys207, Cys234-Cys256, Cys297-Cys309, Cys304-Cys322, and Cys316-Cys331. CUB domains lie at 45–159 and 177–292; these read CGIW…YSFI and CQFE…FTSF. The LDL-receptor class A domain maps to 296–332; it reads PCTSSTFFCHSNMCINNSLVCNGVQNCAYPWDENHCK. Asn311 carries an N-linked (GlcNAc...) asparagine glycan. Residues 348–368 traverse the membrane as a helical segment; the sequence is GTIIGITSGIVLVLLIISILV. Residues 369–525 are Cytoplasmic-facing; sequence QVKQPRKKVM…SAQASISIDF (157 aa). Ser409 is subject to Phosphoserine.

As to quaternary structure, interacts with GRIK2 and GRIK3, but neither with AMPA-nor with NMDA-sensitive glutamate receptors. In terms of processing, N-glycosylated.

It is found in the membrane. Its function is as follows. Accessory subunit of neuronal kainate-sensitive glutamate receptors, GRIK2 and GRIK3. Increases kainate-receptor channel activity, slowing the decay kinetics of the receptors, without affecting their expression at the cell surface, and increasing the open probability of the receptor channels. Modulates the agonist sensitivity of kainate receptors. Slows the decay of kainate receptor-mediated excitatory postsynaptic currents (EPSCs), thus directly influencing synaptic transmission. The protein is Neuropilin and tolloid-like protein 2 (NETO2) of Homo sapiens (Human).